A 138-amino-acid polypeptide reads, in one-letter code: Large ribosomal subunit protein mL43 (138 aa).

It belongs to the mitochondrion-specific ribosomal protein mL43 family. As to quaternary structure, component of the mitochondrial large ribosomal subunit (mt-LSU). Mature N.crassa 74S mitochondrial ribosomes consist of a small (37S) and a large (54S) subunit. The 37S small subunit contains a 16S ribosomal RNA (16S mt-rRNA) and 32 different proteins. The 54S large subunit contains a 23S rRNA (23S mt-rRNA) and 42 different proteins.

It localises to the mitochondrion. Its function is as follows. Component of the mitochondrial ribosome (mitoribosome), a dedicated translation machinery responsible for the synthesis of mitochondrial genome-encoded proteins, including at least some of the essential transmembrane subunits of the mitochondrial respiratory chain. The mitoribosomes are attached to the mitochondrial inner membrane and translation products are cotranslationally integrated into the membrane. The chain is Large ribosomal subunit protein mL43 (mrpl51) from Neurospora crassa (strain ATCC 24698 / 74-OR23-1A / CBS 708.71 / DSM 1257 / FGSC 987).